The sequence spans 486 residues: Ribosomal protein uS12 methylthiotransferase RimO (486 aa).

The 117-residue stretch at 9–125 (RSVALVTLGC…LSSHLEAILH (117 aa)) folds into the MTTase N-terminal domain. Residues C18, C54, C88, C191, C195, and C198 each coordinate [4Fe-4S] cluster. The Radical SAM core domain occupies 177–408 (LGSGPWAPVK…RLVEELVTQR (232 aa)). Positions 410-482 (EERLGEVVEV…GADLLAEPLV (73 aa)) constitute a TRAM domain.

Belongs to the methylthiotransferase family. RimO subfamily. The cofactor is [4Fe-4S] cluster.

Its subcellular location is the cytoplasm. The enzyme catalyses L-aspartate(89)-[ribosomal protein uS12]-hydrogen + (sulfur carrier)-SH + AH2 + 2 S-adenosyl-L-methionine = 3-methylsulfanyl-L-aspartate(89)-[ribosomal protein uS12]-hydrogen + (sulfur carrier)-H + 5'-deoxyadenosine + L-methionine + A + S-adenosyl-L-homocysteine + 2 H(+). Catalyzes the methylthiolation of an aspartic acid residue of ribosomal protein uS12. In Kineococcus radiotolerans (strain ATCC BAA-149 / DSM 14245 / SRS30216), this protein is Ribosomal protein uS12 methylthiotransferase RimO.